The primary structure comprises 155 residues: DNA polymerase epsilon subunit 4 (155 aa).

Composition is skewed to acidic residues over residues 1–16 and 24–48; these read MASE…EEQD and ETEE…DNPE. The tract at residues 1–76 is disordered; that stretch reads MASEELFEAE…APADNEAKMT (76 aa). Residues 49–65 show a composition bias toward polar residues; the sequence is AESTTEQLTEKPVTNGN.

In terms of assembly, component of the DNA polymerase epsilon complex consisting of four subunits: the catalytic subunit PolE1/DNApol-epsilon255 and the accessory subunits PolE2/DNApol-epsilon58, Chrac-14/DNApolE3 and PolE4/Mes4.

Its subcellular location is the nucleus. In terms of biological role, accessory component of the DNA polymerase epsilon complex. Participates in DNA repair and in chromosomal DNA replication. Has a role in cell cycle progression. Required for wing morphogenesis. The chain is DNA polymerase epsilon subunit 4 from Drosophila melanogaster (Fruit fly).